Reading from the N-terminus, the 959-residue chain is Glutamate receptor 3.4 (959 aa).

A signal peptide spans 1–35 (MGFLVMIREVSMAKAIRVVLLCVSVLWVVPKECAC). Over 36-613 (RSNFSRNSSS…SPWSFLKPFT (578 aa)) the chain is Extracellular. N-linked (GlcNAc...) asparagine glycans are attached at residues asparagine 38, asparagine 42, asparagine 108, asparagine 365, asparagine 378, asparagine 404, asparagine 443, asparagine 461, and asparagine 576. Residues 614–634 (IEMWAVTGGFFLFVGAMVWIL) traverse the membrane as a helical segment. Residues 635–643 (EHRFNQEFR) lie on the Cytoplasmic side of the membrane. A helical membrane pass occupies residues 644–664 (GPPRRQLITIFWFSFSTMFFS). Over 665-675 (HRENTVSSLGR) the chain is Cytoplasmic. Residues 676-696 (FVLIIWLFVVLIINSSYTASL) form a helical membrane-spanning segment. Topologically, residues 697–857 (TSILTIRQLT…SEDSQLSLKS (161 aa)) are extracellular. A helical membrane pass occupies residues 858-878 (FWGLFLICGITCFMALTVFFW). At 879–959 (RVFWQYQRLL…TSQSQHGEIT (81 aa)) the chain is on the cytoplasmic side. Disordered regions lie at residues 893 to 913 (DEERAGEVSEPSRSGRGSRAP) and 936 to 959 (KSSKKLKSTQSAAGTSQSQHGEIT). The segment covering 943–959 (STQSAAGTSQSQHGEIT) has biased composition (low complexity).

This sequence belongs to the glutamate-gated ion channel (TC 1.A.10.1) family. In terms of assembly, forms a heteromeric channel with GLR3.2. In terms of tissue distribution, highly expressed in roots and at lower levels in leaves and siliques. Expressed in seedlings, cotyledons, roots (e.g. root hairs, epidermis and cortex cells), stems, leaves (e.g. vascular bundles and hydathodes), and siliques. Expressed in root phloem.

The protein localises to the cell membrane. Its subcellular location is the plastid. The protein resides in the chloroplast membrane. Functionally, glutamate-gated receptor that probably acts as a non-selective cation channel, at least in hypocotyls. Can be triggered by Asn, Ser, Gly and, to a lower extent, Ala, Cys and Glu. May be involved in light-signal transduction and calcium homeostasis via the regulation of calcium influx into cells. Plays an important role in the calcium-based fast transmission of environmental stress. Acts as a negative regulator of lateral root initiation and development. May restrict primordia numbers and position along the root axis by a signaling process originating in the phloem. AtGLR3.4-mediated cytosolic calcium influx may be involved in the regulation of seed germination under salt stress by modulating sodium accumulation through the SOS pathway. This chain is Glutamate receptor 3.4, found in Arabidopsis thaliana (Mouse-ear cress).